The chain runs to 115 residues: Large ribosomal subunit protein eL30 (115 aa).

It belongs to the eukaryotic ribosomal protein eL30 family. As to quaternary structure, component of the large ribosomal subunit.

Its subcellular location is the cytoplasm. Its function is as follows. Component of the large ribosomal subunit. The ribosome is a large ribonucleoprotein complex responsible for the synthesis of proteins in the cell. In Gallus gallus (Chicken), this protein is Large ribosomal subunit protein eL30 (RPL30).